The sequence spans 692 residues: Ribonuclease J (692 aa).

A disordered region spans residues 1-91; it reads MTDNNQNNEN…RNYAKEELDN (91 aa). A compositionally biased stretch (basic and acidic residues) spans 9–25; the sequence is ENHENSSENSKDHHEAR. Positions 57-79 are enriched in basic residues; that stretch reads HHKKEHRPNKKPNNHHKPKHASQ. An N6-acetyllysine mark is found at K135 and K141. Zn(2+) contacts are provided by H209, H211, D213, H214, H278, and D300. K324, K338, and K398 each carry N6-acetyllysine. Residue 501-505 coordinates substrate; the sequence is HVSGH. At K512 the chain carries N6-acetyllysine. H527 contributes to the Zn(2+) binding site. K548, K635, and K650 each carry N6-acetyllysine.

This sequence belongs to the metallo-beta-lactamase superfamily. RNA-metabolizing metallo-beta-lactamase-like family. Bacterial RNase J subfamily. In terms of assembly, homodimer. Homotetramer; dimer of homodimers. Interacts with RNA helicase RhpA, might be a member of a minimal RNA degradosome complex. Zn(2+) is required as a cofactor. Acetylated on nine lysine residues. Some of the residues are acetylated by multiple different mechanisms. RimL is partially responsible for the acetylation of Lys-324, Lys-398 and Lys-650. HPB8_1270 homolog is partially responsible for the acetylation of Lys-324, Lys-398, Lys-512 and Lys-650. Acetyl-phosphate-mediated non-enzymatic acetylation pathway takes part in the acetylation of Lys-135, Lys-324, Lys-398, Lys-512 and Lys-650. Acetylation of the remaining residues Lys-141, Lys-338, Lys-548 and Lys-635 occurs by a yet undetermined mechanism. Acetylation on a number of these residues is important for growth regulation and proper cell morphology.

It is found in the cytoplasm. Its activity is regulated as follows. Catalytic activity is regulated by the balance between homodimers and homotetramers, with homotetramers being the active forms of this enzyme. Acetylation allosterically regulates the homooligomerization state and hence the catalytic activity. Its function is as follows. An RNase that has 5'-3' exoribonuclease and endoribonuclease activity. Degrades 5'-monophosphorylated ssRNA and dsRNA, considerably more active on ssRNA. Association with RhpA significantly increases the dsRNase activity. Degrades RNA substrate with hairpin structures at both ends with low activity, but presence of RhpA significantly increases the activity on this substrate. Stimulates ATPase activity of RNA helicase RhpA. Involved in stabilization of mRNA but apparently not rRNA. The chain is Ribonuclease J from Helicobacter pylori (strain J99 / ATCC 700824) (Campylobacter pylori J99).